We begin with the raw amino-acid sequence, 290 residues long: Membrane protein insertase YidC 1 (290 aa).

A signal peptide spans 1 to 19; sequence MKKKALLPLFLGIMIFLAG. Residue Cys20 is the site of N-palmitoyl cysteine attachment. Cys20 carries the S-diacylglycerol cysteine lipid modification. The next 5 membrane-spanning stretches (helical) occupy residues 56–76, 134–154, 176–196, 211–231, and 232–252; these read FGLAIIVLVLFIRLILLPFML, MLGCLPILIQMPIIMGLYFVL, PDIWITVIAGVLYFIQAVVSS, MVISPIMIIWISLQASSALGL, and YWSVSALFLVIQTHFANIYYS. The disordered stretch occupies residues 270–290; the sequence is HNPYSKKKGKNTQVVSKKNKK. The segment covering 280-290 has biased composition (polar residues); sequence NTQVVSKKNKK.

This sequence belongs to the OXA1/ALB3/YidC family. Type 2 subfamily.

Its subcellular location is the cell membrane. Required for the insertion and/or proper folding and/or complex formation of integral membrane proteins into the membrane. Involved in integration of membrane proteins that insert both dependently and independently of the Sec translocase complex, as well as at least some lipoproteins. In Staphylococcus epidermidis (strain ATCC 12228 / FDA PCI 1200), this protein is Membrane protein insertase YidC 1.